The chain runs to 762 residues: Serine/threonine-protein kinase PLK4 (762 aa).

The region spanning 14–268 (YEVQHLLGKG…LEQVLRHPFM (255 aa)) is the Protein kinase domain. Residues 20–28 (LGKGGFACV) and K43 contribute to the ATP site. Catalysis depends on D139, which acts as the Proton acceptor. Residues 383-498 (AECISMPPLN…ARFVSLVKSK (116 aa)) form the Cryptic POLO box 1 (CPB1) domain. One can recognise a Cryptic POLO box 2 (CPB2) domain in the interval 499–602 (TPKVTYFSGL…GRRPTPEVMP (104 aa)). Positions 657-736 (PIKRLNVPGV…LPQVQMKLKS (80 aa)) constitute a POLO box domain.

Belongs to the protein kinase superfamily. Ser/Thr protein kinase family. CDC5/Polo subfamily. In terms of assembly, homodimer. Ubiquitinated by the SCF(Slimb) ubiquitin ligase complex; leading to its degradation by the proteasome during interphase and regulating centriole number and ensuring the block to centriole reduplication.

It is found in the cytoplasm. The protein localises to the cytoskeleton. Its subcellular location is the microtubule organizing center. It localises to the centrosome. The protein resides in the centriole. The enzyme catalyses L-seryl-[protein] + ATP = O-phospho-L-seryl-[protein] + ADP + H(+). It carries out the reaction L-threonyl-[protein] + ATP = O-phospho-L-threonyl-[protein] + ADP + H(+). Serine/threonine-protein kinase that plays a central role in centriole duplication. Able to trigger procentriole formation on the surface of the mother centriole cylinder, using mother centriole as a platform, leading to the recruitment of centriole biogenesis proteins such as sas-6. When overexpressed, it is able to induce centrosome amplification through the simultaneous generation of multiple procentrioles adjoining each parental centriole during S phase. Centrosome amplification following overexpression can initiate tumorigenesis, highlighting the importance of centrosome regulation in cancers. In Drosophila grimshawi (Hawaiian fruit fly), this protein is Serine/threonine-protein kinase PLK4 (SAK).